The chain runs to 450 residues: MAPALSPTRSHHVAVIGAGPAGLVAARELRREGHSVVVFEKQKQVGGTWIYTDEVESDPLSVDPTRSVVHSSVYRSLRINGTRECTGYRDFPFVVRSGVSRDRRRFPSHGEVLAYLKDFAKEFGIEEMVRFETEVVKVSPAAEEGIGKWRIESTEKEKKVRRDEIYDAVVVCNGHYVEPRLAQIPGISSWPGKEMHSHNYRIPEPFRDKVAVLIGNSSSAEDISRDIARVAKEVHVACRSNPADTFIKQTGYNNLWTHSMIESVHEDGSVVYQNGKTISVDIIMHCTGYKYHFPFLDTNGIVTVDDNRVGPLYKDVFPPAFAPWLSFIGIPWQVLPFPMFELQSKWIAGVLSGRIPLPSKEDMMIEIKTFYSTLEVQGIPKRYTHRMGNTQFEYDNWLASQCGCSETEEWRKEMCLANGVRKEAHPETYRDEWDDHHLVSEAYQDFSLYS.

17-22 (GAGPAG) contributes to the FAD binding site. NADP(+) is bound at residue 215 to 220 (GNSSSA).

It belongs to the FMO family. FAD serves as cofactor.

Its function is as follows. Catalyzes the conversion of methylthioalkyl glucosinolates of any chain length into methylsulfinylalkyl glucosinolates. In Arabidopsis thaliana (Mouse-ear cress), this protein is Flavin-containing monooxygenase FMO GS-OX-like 5.